Here is a 390-residue protein sequence, read N- to C-terminus: Queuine tRNA-ribosyltransferase (390 aa).

D92 functions as the Proton acceptor in the catalytic mechanism. Substrate contacts are provided by residues D92 to F96, D146, Q195, and G222. The RNA binding stretch occupies residues G253–D259. Catalysis depends on D272, which acts as the Nucleophile. Positions T277–R281 are RNA binding; important for wobble base 34 recognition. C310, C312, C315, and H354 together coordinate Zn(2+).

This sequence belongs to the queuine tRNA-ribosyltransferase family. As to quaternary structure, homodimer. Within each dimer, one monomer is responsible for RNA recognition and catalysis, while the other monomer binds to the replacement base PreQ1. Requires Zn(2+) as cofactor.

It catalyses the reaction 7-aminomethyl-7-carbaguanine + guanosine(34) in tRNA = 7-aminomethyl-7-carbaguanosine(34) in tRNA + guanine. It participates in tRNA modification; tRNA-queuosine biosynthesis. In terms of biological role, catalyzes the base-exchange of a guanine (G) residue with the queuine precursor 7-aminomethyl-7-deazaguanine (PreQ1) at position 34 (anticodon wobble position) in tRNAs with GU(N) anticodons (tRNA-Asp, -Asn, -His and -Tyr). Catalysis occurs through a double-displacement mechanism. The nucleophile active site attacks the C1' of nucleotide 34 to detach the guanine base from the RNA, forming a covalent enzyme-RNA intermediate. The proton acceptor active site deprotonates the incoming PreQ1, allowing a nucleophilic attack on the C1' of the ribose to form the product. After dissociation, two additional enzymatic reactions on the tRNA convert PreQ1 to queuine (Q), resulting in the hypermodified nucleoside queuosine (7-(((4,5-cis-dihydroxy-2-cyclopenten-1-yl)amino)methyl)-7-deazaguanosine). This chain is Queuine tRNA-ribosyltransferase, found in Delftia acidovorans (strain DSM 14801 / SPH-1).